The chain runs to 95 residues: Probable dolichol-phosphate mannosyltransferase subunit 3 (95 aa).

2 consecutive transmembrane segments (helical) span residues 10 to 30 and 44 to 64; these read AHVI…VPVL and APFF…VYGV.

Belongs to the DPM3 family.

The protein resides in the endoplasmic reticulum membrane. Its pathway is protein modification; protein glycosylation. Functionally, stabilizer subunit of the dolichol-phosphate-mannose synthase complex. The sequence is that of Probable dolichol-phosphate mannosyltransferase subunit 3 (dpm-3) from Caenorhabditis elegans.